A 293-amino-acid polypeptide reads, in one-letter code: Ribosomal protein L11 methyltransferase (293 aa).

S-adenosyl-L-methionine-binding residues include threonine 145, glycine 166, aspartate 188, and asparagine 230.

The protein belongs to the methyltransferase superfamily. PrmA family.

Its subcellular location is the cytoplasm. The enzyme catalyses L-lysyl-[protein] + 3 S-adenosyl-L-methionine = N(6),N(6),N(6)-trimethyl-L-lysyl-[protein] + 3 S-adenosyl-L-homocysteine + 3 H(+). In terms of biological role, methylates ribosomal protein L11. This Salmonella newport (strain SL254) protein is Ribosomal protein L11 methyltransferase.